A 351-amino-acid chain; its full sequence is CREB homolog crh-2 (351 aa).

Disordered regions lie at residues 46-104 (EPCT…EPLG) and 119-149 (SPSA…HQQQ). Low complexity predominate over residues 82–95 (GSSSGSPSSSLSSP). The 64-residue stretch at 282–345 (SLKIVRRKIK…RDLQQKLHQY (64 aa)) folds into the bZIP domain. Positions 284-304 (KIVRRKIKNKLSAQESRRKRK) are basic motif. The tract at residues 307–314 (IDALEGRL) is leucine-zipper.

This sequence belongs to the bZIP family.

It localises to the nucleus. Transcription factor. Plays a role in regulating the developmentally arrested larval state known as dauer, when induced by long-term exposure to the Gram-negative bacterium P.aeruginosa PAO1, but dispensable for dauer formation induced by starvation. Involved in regulating expression of microRNA mir-243, during long-term exposure to P.aeruginosa PAO1. In Caenorhabditis elegans, this protein is CREB homolog crh-2.